Here is a 365-residue protein sequence, read N- to C-terminus: Glucose 1-dehydrogenase 1 (365 aa).

D38 serves as a coordination point for Zn(2+). Substrate is bound at residue T40. Zn(2+)-binding residues include H63 and E64. E115 and E151 together coordinate substrate. E151 contributes to the Zn(2+) binding site. NADP(+) contacts are provided by residues 182 to 185 (NGSL), 207 to 208 (RR), 272 to 274 (LGV), and 301 to 303 (SVN). Position 303 (N303) interacts with substrate.

It belongs to the zinc-containing alcohol dehydrogenase family. Glucose 1-dehydrogenase subfamily. Zn(2+) is required as a cofactor.

It catalyses the reaction D-glucose + NAD(+) = D-glucono-1,5-lactone + NADH + H(+). The enzyme catalyses D-glucose + NADP(+) = D-glucono-1,5-lactone + NADPH + H(+). Functionally, catalyzes the NAD(P)(+)-dependent oxidation of D-glucose to D-gluconate via gluconolactone. Can utilize both NAD(+) and NADP(+) as electron acceptor. Is involved in the degradation of glucose through a modified Entner-Doudoroff pathway. The protein is Glucose 1-dehydrogenase 1 of Haloterrigena turkmenica (strain ATCC 51198 / DSM 5511 / JCM 9101 / NCIMB 13204 / VKM B-1734 / 4k) (Halococcus turkmenicus).